A 725-amino-acid polypeptide reads, in one-letter code: Fatty acid oxidation complex subunit alpha (725 aa).

Residues Met1–Ser189 are enoyl-CoA hydratase/isomerase. A substrate-binding site is contributed by Asp296. The 3-hydroxyacyl-CoA dehydrogenase stretch occupies residues Glu311 to Ala725. Residues Met324, Asp343, Val400–Glu402, Lys407, and Ser429 contribute to the NAD(+) site. His450 functions as the For 3-hydroxyacyl-CoA dehydrogenase activity in the catalytic mechanism. Position 453 (Asn453) interacts with NAD(+). Residues Asn500 and Tyr660 each coordinate substrate.

The protein in the N-terminal section; belongs to the enoyl-CoA hydratase/isomerase family. This sequence in the C-terminal section; belongs to the 3-hydroxyacyl-CoA dehydrogenase family. Heterotetramer of two alpha chains (FadB) and two beta chains (FadA).

It carries out the reaction a (3S)-3-hydroxyacyl-CoA + NAD(+) = a 3-oxoacyl-CoA + NADH + H(+). The enzyme catalyses a (3S)-3-hydroxyacyl-CoA = a (2E)-enoyl-CoA + H2O. The catalysed reaction is a 4-saturated-(3S)-3-hydroxyacyl-CoA = a (3E)-enoyl-CoA + H2O. It catalyses the reaction (3S)-3-hydroxybutanoyl-CoA = (3R)-3-hydroxybutanoyl-CoA. It carries out the reaction a (3Z)-enoyl-CoA = a 4-saturated (2E)-enoyl-CoA. The enzyme catalyses a (3E)-enoyl-CoA = a 4-saturated (2E)-enoyl-CoA. It functions in the pathway lipid metabolism; fatty acid beta-oxidation. Its function is as follows. Involved in the aerobic and anaerobic degradation of long-chain fatty acids via beta-oxidation cycle. Catalyzes the formation of 3-oxoacyl-CoA from enoyl-CoA via L-3-hydroxyacyl-CoA. It can also use D-3-hydroxyacyl-CoA and cis-3-enoyl-CoA as substrate. The chain is Fatty acid oxidation complex subunit alpha from Aliivibrio fischeri (strain MJ11) (Vibrio fischeri).